The primary structure comprises 177 residues: Large ribosomal subunit protein uL6 (177 aa).

This sequence belongs to the universal ribosomal protein uL6 family. As to quaternary structure, part of the 50S ribosomal subunit.

In terms of biological role, this protein binds to the 23S rRNA, and is important in its secondary structure. It is located near the subunit interface in the base of the L7/L12 stalk, and near the tRNA binding site of the peptidyltransferase center. This Brucella anthropi (strain ATCC 49188 / DSM 6882 / CCUG 24695 / JCM 21032 / LMG 3331 / NBRC 15819 / NCTC 12168 / Alc 37) (Ochrobactrum anthropi) protein is Large ribosomal subunit protein uL6.